We begin with the raw amino-acid sequence, 152 residues long: 6,7-dimethyl-8-ribityllumazine synthase (152 aa).

Residues phenylalanine 21, 55 to 57 (AFE), and 79 to 81 (CVI) each bind 5-amino-6-(D-ribitylamino)uracil. 84–85 (ST) provides a ligand contact to (2S)-2-hydroxy-3-oxobutyl phosphate. Histidine 87 acts as the Proton donor in catalysis. Phenylalanine 112 is a 5-amino-6-(D-ribitylamino)uracil binding site. Arginine 126 serves as a coordination point for (2S)-2-hydroxy-3-oxobutyl phosphate.

Belongs to the DMRL synthase family. As to quaternary structure, forms an icosahedral capsid composed of 60 subunits, arranged as a dodecamer of pentamers.

The enzyme catalyses (2S)-2-hydroxy-3-oxobutyl phosphate + 5-amino-6-(D-ribitylamino)uracil = 6,7-dimethyl-8-(1-D-ribityl)lumazine + phosphate + 2 H2O + H(+). Its pathway is cofactor biosynthesis; riboflavin biosynthesis; riboflavin from 2-hydroxy-3-oxobutyl phosphate and 5-amino-6-(D-ribitylamino)uracil: step 1/2. Functionally, catalyzes the formation of 6,7-dimethyl-8-ribityllumazine by condensation of 5-amino-6-(D-ribitylamino)uracil with 3,4-dihydroxy-2-butanone 4-phosphate. This is the penultimate step in the biosynthesis of riboflavin. This Staphylococcus saprophyticus subsp. saprophyticus (strain ATCC 15305 / DSM 20229 / NCIMB 8711 / NCTC 7292 / S-41) protein is 6,7-dimethyl-8-ribityllumazine synthase.